The sequence spans 58 residues: MKTQDDGVLPPYDVNQLLGWDLNLSLFLGLCLMLLLAGSCLPSPGITGLSHGSNREDR.

Residues 17–37 traverse the membrane as a helical segment; it reads LLGWDLNLSLFLGLCLMLLLA.

It localises to the membrane. The chain is Putative transcript Y 13 protein (TTTY13) from Homo sapiens (Human).